Here is a 294-residue protein sequence, read N- to C-terminus: Extracellular metalloprotease TRV_07111 (294 aa).

Positions 1 to 19 (MRFSVVFAAIAALSSVVTA) are cleaved as a signal peptide. N-linked (GlcNAc...) asparagine glycans are attached at residues asparagine 49, asparagine 54, and asparagine 74. Zn(2+) is bound at residue histidine 185. Residue glutamate 186 is part of the active site. Histidine 189 contributes to the Zn(2+) binding site. Cysteine 224 and cysteine 250 are oxidised to a cystine.

It belongs to the peptidase M43B family.

It localises to the secreted. Functionally, secreted metalloproteinase that allows assimilation of proteinaceous substrates. Plays a pivotal role as a pathogenicity determinant during infections and contributes to the ability of the pathogen to persist within the mammalian host. In Trichophyton verrucosum (strain HKI 0517), this protein is Extracellular metalloprotease TRV_07111.